Here is a 326-residue protein sequence, read N- to C-terminus: GTP 3',8-cyclase (326 aa).

The Radical SAM core domain occupies 7–232 (GFGRSFPYLR…PRAADAGPAR (226 aa)). Residue Arg16 coordinates GTP. Positions 23 and 27 each coordinate [4Fe-4S] cluster. Tyr29 provides a ligand contact to S-adenosyl-L-methionine. Cys30 provides a ligand contact to [4Fe-4S] cluster. Arg65 contributes to the GTP binding site. Position 69 (Gly69) interacts with S-adenosyl-L-methionine. Residue Thr96 coordinates GTP. Ser120 contributes to the S-adenosyl-L-methionine binding site. Residue Lys157 coordinates GTP. Met191 provides a ligand contact to S-adenosyl-L-methionine. [4Fe-4S] cluster contacts are provided by Cys254 and Cys257. GTP is bound at residue 259–261 (RLR). [4Fe-4S] cluster is bound at residue Cys271.

It belongs to the radical SAM superfamily. MoaA family. As to quaternary structure, monomer and homodimer. Requires [4Fe-4S] cluster as cofactor.

The enzyme catalyses GTP + AH2 + S-adenosyl-L-methionine = (8S)-3',8-cyclo-7,8-dihydroguanosine 5'-triphosphate + 5'-deoxyadenosine + L-methionine + A + H(+). It participates in cofactor biosynthesis; molybdopterin biosynthesis. Its function is as follows. Catalyzes the cyclization of GTP to (8S)-3',8-cyclo-7,8-dihydroguanosine 5'-triphosphate. The protein is GTP 3',8-cyclase of Stenotrophomonas maltophilia (strain R551-3).